We begin with the raw amino-acid sequence, 570 residues long: Sulfite reductase [NADPH] hemoprotein beta-component (570 aa).

Residues Cys434, Cys440, Cys479, and Cys483 each coordinate [4Fe-4S] cluster. Cys483 contributes to the siroheme binding site.

It belongs to the nitrite and sulfite reductase 4Fe-4S domain family. Alpha(8)-beta(8). The alpha component is a flavoprotein, the beta component is a hemoprotein. Siroheme is required as a cofactor. It depends on [4Fe-4S] cluster as a cofactor.

The enzyme catalyses hydrogen sulfide + 3 NADP(+) + 3 H2O = sulfite + 3 NADPH + 4 H(+). It participates in sulfur metabolism; hydrogen sulfide biosynthesis; hydrogen sulfide from sulfite (NADPH route): step 1/1. Its function is as follows. Component of the sulfite reductase complex that catalyzes the 6-electron reduction of sulfite to sulfide. This is one of several activities required for the biosynthesis of L-cysteine from sulfate. The polypeptide is Sulfite reductase [NADPH] hemoprotein beta-component (Salmonella gallinarum (strain 287/91 / NCTC 13346)).